The chain runs to 337 residues: Vacuolar protein sorting-associated protein 26B (337 aa).

Residues 311 to 337 form a disordered region; that stretch reads SQRFEGTSHPETRPQHSGAAAVEQEQE.

The protein belongs to the VPS26 family. In terms of assembly, component of the heterotrimeric retromer cargo-selective complex (CSC) which is believed to associate with variable sorting nexins to form functionally distinct retromer complex variants.

Its subcellular location is the cytoplasm. The protein localises to the membrane. The protein resides in the endosome. Functionally, acts as a component of the retromer cargo-selective complex (CSC). The CSC is believed to be the core functional component of retromer or respective retromer complex variants acting to prevent missorting of selected transmembrane cargo proteins into the lysosomal degradation pathway. Retromer mediates retrograde transport of cargo proteins from endosomes to the trans-Golgi network (TGN). The protein is Vacuolar protein sorting-associated protein 26B (vps26b) of Xenopus tropicalis (Western clawed frog).